A 533-amino-acid chain; its full sequence is Chromosomal replication initiator protein DnaA (533 aa).

Residues 1–72 are domain I, interacts with DnaA modulators; sequence MNDFWQHCSA…DLARDFWNAP (72 aa). Residues 72–196 are domain II; sequence PIEVQFVLDP…EAADSMYERS (125 aa). Positions 83-120 are disordered; it reads AGQRSPAGATPLAPRAPLPSANPAPVAPGPASAPAVDA. Residues 96–110 are compositionally biased toward pro residues; the sequence is PRAPLPSANPAPVAP. The segment covering 111–120 has biased composition (low complexity); that stretch reads GPASAPAVDA. The interval 197–413 is domain III, AAA+ region; the sequence is KLNPVLTFDN…GALRKILAYS (217 aa). Residues G241, G243, K244, and T245 each coordinate ATP. Positions 414–533 are domain IV, binds dsDNA; that stretch reads KFHGREITIE…LHVLEQTLKG (120 aa).

Belongs to the DnaA family. Oligomerizes as a right-handed, spiral filament on DNA at oriC.

The protein resides in the cytoplasm. In terms of biological role, plays an essential role in the initiation and regulation of chromosomal replication. ATP-DnaA binds to the origin of replication (oriC) to initiate formation of the DNA replication initiation complex once per cell cycle. Binds the DnaA box (a 9 base pair repeat at the origin) and separates the double-stranded (ds)DNA. Forms a right-handed helical filament on oriC DNA; dsDNA binds to the exterior of the filament while single-stranded (ss)DNA is stabiized in the filament's interior. The ATP-DnaA-oriC complex binds and stabilizes one strand of the AT-rich DNA unwinding element (DUE), permitting loading of DNA polymerase. After initiation quickly degrades to an ADP-DnaA complex that is not apt for DNA replication. Binds acidic phospholipids. The sequence is that of Chromosomal replication initiator protein DnaA from Burkholderia pseudomallei (strain 1710b).